The primary structure comprises 511 residues: Maturase K (511 aa).

This sequence belongs to the intron maturase 2 family. MatK subfamily.

It localises to the plastid. It is found in the chloroplast. Its function is as follows. Usually encoded in the trnK tRNA gene intron. Probably assists in splicing its own and other chloroplast group II introns. The sequence is that of Maturase K from Maihuenia poeppigii (Hardy cactus).